Consider the following 225-residue polypeptide: Glucosyl-3-phosphoglycerate phosphatase (225 aa).

Substrate is bound at residue arginine 10. The Tele-phosphohistidine intermediate role is filled by histidine 11. Arginine 60 contacts substrate. Catalysis depends on glutamate 84, which acts as the Proton donor/acceptor. Histidine 158 serves as a coordination point for substrate.

It belongs to the phosphoglycerate mutase family. Homodimer.

It catalyses the reaction (2R)-2-O-(alpha-D-glucopyranosyl)-3-phospho-glycerate + H2O = (2R)-2-O-(alpha-D-glucopyranosyl)-glycerate + phosphate. Involved in the biosynthesis of mycobacterial methylglucose lipopolysaccharides (MGLP). Catalyzes the dephosphorylation of glucosyl-3-phosphoglycerate (GPG) to glucosylglycerate. The chain is Glucosyl-3-phosphoglycerate phosphatase from Mycolicibacterium vanbaalenii (strain DSM 7251 / JCM 13017 / BCRC 16820 / KCTC 9966 / NRRL B-24157 / PYR-1) (Mycobacterium vanbaalenii).